Here is a 489-residue protein sequence, read N- to C-terminus: Homoserine O-acetyltransferase (489 aa).

The AB hydrolase-1 domain occupies 47–354 (NAILVCHALT…NYGHDSFLLE (308 aa)). Serine 152 serves as the catalytic Nucleophile. Substrate is bound at residue arginine 221. Catalysis depends on residues aspartate 315 and histidine 348. Substrate is bound at residue aspartate 349. CBS domains follow at residues 375–434 (MIED…NLEE) and 436–489 (MTKN…IEEF).

It belongs to the AB hydrolase superfamily. MetX family. In terms of assembly, homodimer.

It localises to the cytoplasm. The catalysed reaction is L-homoserine + acetyl-CoA = O-acetyl-L-homoserine + CoA. The protein operates within amino-acid biosynthesis; L-methionine biosynthesis via de novo pathway; O-acetyl-L-homoserine from L-homoserine: step 1/1. Transfers an acetyl group from acetyl-CoA to L-homoserine, forming acetyl-L-homoserine. The polypeptide is Homoserine O-acetyltransferase (Methanohalobium evestigatum (strain ATCC BAA-1072 / DSM 3721 / NBRC 107634 / OCM 161 / Z-7303)).